The sequence spans 255 residues: Ribonuclease PH (255 aa).

Residues R86 and 124-126 contribute to the phosphate site; that span reads GTR.

Belongs to the RNase PH family. Homohexameric ring arranged as a trimer of dimers.

It catalyses the reaction tRNA(n+1) + phosphate = tRNA(n) + a ribonucleoside 5'-diphosphate. Phosphorolytic 3'-5' exoribonuclease that plays an important role in tRNA 3'-end maturation. Removes nucleotide residues following the 3'-CCA terminus of tRNAs; can also add nucleotides to the ends of RNA molecules by using nucleoside diphosphates as substrates, but this may not be physiologically important. Probably plays a role in initiation of 16S rRNA degradation (leading to ribosome degradation) during starvation. This is Ribonuclease PH from Geobacillus thermodenitrificans (strain NG80-2).